The following is a 336-amino-acid chain: F420-dependent glucose-6-phosphate dehydrogenase (336 aa).

Position 39 (Asp39) interacts with coenzyme F420-(gamma-Glu)n. The active-site Proton donor is His40. Coenzyme F420-(gamma-Glu)n is bound by residues Thr76 and 107 to 108 (TG). Glu109 acts as the Proton acceptor in catalysis. Residues Asn112, 177–178 (GG), and 180–181 (AV) each bind coenzyme F420-(gamma-Glu)n. Substrate is bound by residues Thr195, Lys198, Lys259, and Arg283.

Belongs to the F420-dependent glucose-6-phosphate dehydrogenase family. In terms of assembly, homodimer.

The catalysed reaction is oxidized coenzyme F420-(gamma-L-Glu)(n) + D-glucose 6-phosphate + H(+) = 6-phospho-D-glucono-1,5-lactone + reduced coenzyme F420-(gamma-L-Glu)(n). Its function is as follows. Catalyzes the coenzyme F420-dependent oxidation of glucose 6-phosphate (G6P) to 6-phosphogluconolactone. Appears to have a role in resistance to oxidative stress, via its consumption of G6P that serves as a source of reducing power to combat oxidative stress in mycobacteria. The chain is F420-dependent glucose-6-phosphate dehydrogenase from Mycobacterium avium (strain 104).